The sequence spans 122 residues: Allatotropin (122 aa).

The first 23 residues, 1–23 (MRVILAITLLFVAGSFIATASKG), serve as a signal peptide directing secretion. The propeptide occupies 24-40 (RNYPRFFKHRMKLREIR). Phe53 bears the Phenylalanine amide mark. Residues 57–122 (ESPAERIPDL…GDDSKKGTIA (66 aa)) constitute a propeptide that is removed on maturation.

As to expression, expressed in brain and ventral ganglia but not in the retrocerebral complex (at protein level).

Its subcellular location is the secreted. Neuropeptide stimulator of juvenile hormone synthesis. This is Allatotropin from Camponotus floridanus (Florida carpenter ant).